We begin with the raw amino-acid sequence, 137 residues long: uncharacterized protein (137 aa).

Residues 116–136 (YLSIANLATLLLFGIIGLSII) traverse the membrane as a helical segment.

It is found in the host membrane. This is an uncharacterized protein from His1 virus (isolate Australia/Victoria) (His1V).